The primary structure comprises 108 residues: Biogenesis of lysosome-related organelles complex 1 subunit CNL1 (108 aa).

Belongs to the BLOC1S4 family. In terms of assembly, component of the biogenesis of lysosome-related organelles complex-1 (BLOC-1).

The protein resides in the cytoplasm. In terms of biological role, component of the biogenesis of lysosome-related organelles complex-1 (BLOC-1), a complex that is involved in endosomal cargo sorting. The chain is Biogenesis of lysosome-related organelles complex 1 subunit CNL1 (CLN1) from Zygosaccharomyces rouxii (strain ATCC 2623 / CBS 732 / NBRC 1130 / NCYC 568 / NRRL Y-229).